Consider the following 391-residue polypeptide: MRKLFTSESVTEGHPDKICDQISDAVLDAILDKDPNGRVACETAVTTGMVMVMGEISTKCYVDIPKLVRETIRGIGYDRAKYGFDCETCSVITSIDEQSVDIAIGVDEALESKKGEMDKLDAVGAGDQGMMFGFATNETKEYMPMPIEMAHKLSRRLSEVRKNGTLPYLRPDGKTQVTVEYENGKPVRIDAIVISTQHGPEVYLEQIEKDIKEHVIKVIVPSELLDENTKYFINPTGRFVVGGPQGDSGLTGRKIIVDTYGGYGRHGGGAFSGKDPTKVDRSAAYAARWVAKNLVAAGVADKLEIQLAYAIGVAKPVSISVDTFGTGKMTDEEIVSIVNKVFDLRPGAIIRDLDLRRPIYKQVAAYGHFGRTDIDVPWERLDKVEEIKKHI.

H14 contributes to the ATP binding site. Mg(2+) is bound at residue D16. E42 is a K(+) binding site. Residues E55 and Q98 each contribute to the L-methionine site. Residues 98-108 (QSVDIAIGVDE) form a flexible loop region. Residues 172 to 174 (DGK), 238 to 239 (RF), D247, 253 to 254 (RK), A270, and K274 each bind ATP. An L-methionine-binding site is contributed by D247. Residue K278 coordinates L-methionine.

The protein belongs to the AdoMet synthase family. In terms of assembly, homotetramer; dimer of dimers. Mg(2+) is required as a cofactor. Requires K(+) as cofactor.

It localises to the cytoplasm. It carries out the reaction L-methionine + ATP + H2O = S-adenosyl-L-methionine + phosphate + diphosphate. It functions in the pathway amino-acid biosynthesis; S-adenosyl-L-methionine biosynthesis; S-adenosyl-L-methionine from L-methionine: step 1/1. Functionally, catalyzes the formation of S-adenosylmethionine (AdoMet) from methionine and ATP. The overall synthetic reaction is composed of two sequential steps, AdoMet formation and the subsequent tripolyphosphate hydrolysis which occurs prior to release of AdoMet from the enzyme. This Clostridium botulinum (strain Okra / Type B1) protein is S-adenosylmethionine synthase.